Here is a 363-residue protein sequence, read N- to C-terminus: Bonnadiene synthase (363 aa).

The Mg(2+) site is built by aspartate 93, aspartate 98, asparagine 234, serine 238, and glutamate 242.

The protein belongs to the terpene synthase family. Requires Mg(2+) as cofactor.

It catalyses the reaction (2E,6E,10E)-geranylgeranyl diphosphate = bonnadiene + diphosphate. It functions in the pathway secondary metabolite biosynthesis; terpenoid biosynthesis. In terms of biological role, diterpene synthase that catalyzes the conversion of geranylgeranyl diphosphate (GGPP) to bonnadiene. Cannot use geranyl diphosphate (GPP), farnesyl diphosphate (FPP) and geranylfarnesyl diphosphate (GFPP). This Allokutzneria albata (Kibdelosporangium albatum) protein is Bonnadiene synthase.